Reading from the N-terminus, the 556-residue chain is MSVSAFNRRWAAVILEALTRHGVRHVCIAPGSRSTPLTLAAAENPAFIHHTHFDERGLGHLALGLAKVSQQPVAVIVTSGTAVANLYPALIEAGLTGEKLILLTADRPPELIDCGANQAIRQAGMFASHPSQTLSLPRPTQDIPARWLVSTIDNALAMLHAGALHINCPFAEPLYGDMNDTGLVWQQRLGDWWQDEKPWLREARRLESDKQRDWFFWRQKRGVVVAGRMSAEEGKKVAQWAQTLGWPLIGDVLSQTGQPLPCADLWLGNAKAVTELQQAQIVVQLGSSLTGKRLLQWQATCEPEEYWVIDNIEGRLDPAHHRGRRLVAKIADWLELHPAEKRKPWCVEIPRLAELAWQRVVAQRDTFGEAQLAHRIRDYLPEQGQLFVGNSLVVRLIDALSQLPAGYPVYSNRGASGIDGLLSTAAGVQRASAKSTLAIVGDLSALYDLNALALLRQVSAPFVLIVVNNNGGQIFSLLPTPQSKRERFYLMPQNVHFDHAAAMFNLRYHRPENWEELESALAGAWRTPATTVIELVVNDTDGAQTLQQLLAQVSHL.

The protein belongs to the TPP enzyme family. MenD subfamily. Homodimer. Requires Mg(2+) as cofactor. Mn(2+) serves as cofactor. The cofactor is thiamine diphosphate.

It carries out the reaction isochorismate + 2-oxoglutarate + H(+) = 5-enolpyruvoyl-6-hydroxy-2-succinyl-cyclohex-3-ene-1-carboxylate + CO2. It participates in quinol/quinone metabolism; 1,4-dihydroxy-2-naphthoate biosynthesis; 1,4-dihydroxy-2-naphthoate from chorismate: step 2/7. Its pathway is quinol/quinone metabolism; menaquinone biosynthesis. In terms of biological role, catalyzes the thiamine diphosphate-dependent decarboxylation of 2-oxoglutarate and the subsequent addition of the resulting succinic semialdehyde-thiamine pyrophosphate anion to isochorismate to yield 2-succinyl-5-enolpyruvyl-6-hydroxy-3-cyclohexene-1-carboxylate (SEPHCHC). The polypeptide is 2-succinyl-5-enolpyruvyl-6-hydroxy-3-cyclohexene-1-carboxylate synthase (Salmonella typhimurium (strain LT2 / SGSC1412 / ATCC 700720)).